The sequence spans 330 residues: Tryptophan--tRNA ligase (330 aa).

ATP-binding positions include 6–8 (QPT) and 14–15 (GN). A 'HIGH' region motif is present at residues 7–15 (PTGSLHLGN). D130 contributes to the L-tryptophan binding site. ATP-binding positions include 142-144 (GED), V185, and 194-198 (KMSKS). The 'KMSKS' region signature appears at 194–198 (KMSKS).

Belongs to the class-I aminoacyl-tRNA synthetase family. As to quaternary structure, homodimer.

Its subcellular location is the cytoplasm. The catalysed reaction is tRNA(Trp) + L-tryptophan + ATP = L-tryptophyl-tRNA(Trp) + AMP + diphosphate + H(+). Its function is as follows. Catalyzes the attachment of tryptophan to tRNA(Trp). The protein is Tryptophan--tRNA ligase of Thermosynechococcus vestitus (strain NIES-2133 / IAM M-273 / BP-1).